An 846-amino-acid polypeptide reads, in one-letter code: DNA mismatch repair protein MutS (846 aa).

594–601 provides a ligand contact to ATP; that stretch reads GPNMSGKS.

The protein belongs to the DNA mismatch repair MutS family.

Functionally, this protein is involved in the repair of mismatches in DNA. It is possible that it carries out the mismatch recognition step. This protein has a weak ATPase activity. This Macrococcus caseolyticus (strain JCSC5402) (Macrococcoides caseolyticum) protein is DNA mismatch repair protein MutS.